The chain runs to 100 residues: Large ribosomal subunit protein uL23 (100 aa).

This sequence belongs to the universal ribosomal protein uL23 family. In terms of assembly, part of the 50S ribosomal subunit. Contacts protein L29, and trigger factor when it is bound to the ribosome.

Its function is as follows. One of the early assembly proteins it binds 23S rRNA. One of the proteins that surrounds the polypeptide exit tunnel on the outside of the ribosome. Forms the main docking site for trigger factor binding to the ribosome. In Synechococcus sp. (strain WH7803), this protein is Large ribosomal subunit protein uL23.